The following is a 370-amino-acid chain: MSFEERRKKDSKESSSKEKDKALNLVLGQIERNFGRGSIMRLGDASRMKVETISTGALTLDLALGGGYPKGRVVEVYGPESSGKTTLTLHAIAEVQKNGGIAAFVDAEHALDPVYAASLGVDVENLLVSQPDTGEMALEIVDQLIRSTAVDLVVVDSVAALTPRAEIEGEMGDHVIGSQARLMSQAMRKITGNIGKSGCTVIFLNQLRLKIGVTYGNPETTTGGNALKFYASVRLDIRRIQTLKRGTEEYGIRAKVKVAKNKVAPPFRIAEFDILFGKGISTTGCLLDLAEETNIIIRRGAWYSYEGENIGQGRDNTIIWLDQNLEIKKKVEGIVKSKLTEGTEVSSNSMKALNSNPENAVIANDIKTVA.

A disordered region spans residues methionine 1–aspartate 20. Glycine 78–threonine 85 lines the ATP pocket.

It belongs to the RecA family.

It localises to the cytoplasm. Functionally, can catalyze the hydrolysis of ATP in the presence of single-stranded DNA, the ATP-dependent uptake of single-stranded DNA by duplex DNA, and the ATP-dependent hybridization of homologous single-stranded DNAs. It interacts with LexA causing its activation and leading to its autocatalytic cleavage. In Prochlorococcus marinus (strain MIT 9515), this protein is Protein RecA.